Here is a 345-residue protein sequence, read N- to C-terminus: Membrane progestin receptor gamma-A (345 aa).

The Cytoplasmic segment spans residues 1 to 52; the sequence is MLNLIKLPQVFTINQVPKVFHEDGIISGYRHPCSSAKDCVLSLFQLTNETLN. A helical transmembrane segment spans residues 53-73; that stretch reads IWTHFLPTWFFLWKLLTVVLV. At 74–80 the chain is on the extracellular side; the sequence is LEDWRDP. A helical transmembrane segment spans residues 81–101; it reads FIWPFLVFLLSCCVYPLASSC. Over 102 to 114 the chain is Cytoplasmic; the sequence is AHTFSTMSERARH. A helical transmembrane segment spans residues 115-135; the sequence is ICFFFDYGALSFYSLGSAIIY. Topologically, residues 136-148 are extracellular; the sequence is SSYSFPDKWVNGT. A helical transmembrane segment spans residues 149–169; that stretch reads FHLNYVSIAVVNSIISTALAC. Residues 170–201 are Cytoplasmic-facing; that stretch reads YSRLGLPFLEYNCHSIKRPSGKLDQKLCKCLR. The chain crosses the membrane as a helical span at residues 202-222; sequence IIAFVYPYLFDNIPLFYRIFV. Topologically, residues 223-272 are extracellular; it reads CAGEGCTVNEANTVHYQHTSLAFFTGFLFATHLPERLAPGSFDYIGHSHQ. The chain crosses the membrane as a helical span at residues 273–293; sequence LFHVFAIIGTYFQMTAIELDM. The Cytoplasmic segment spans residues 294–314; it reads AARKQWLHAHLPPVTFLNTVG. A helical transmembrane segment spans residues 315-335; it reads AAFFSVVSGLCIVYVFSLSLF. Over 336–345 the chain is Extracellular; the sequence is STRGVKNKSF.

The protein belongs to the ADIPOR family.

It localises to the membrane. Steroid membrane receptor. Binds progesterone. May be involved in oocyte maturation. In Danio rerio (Zebrafish), this protein is Membrane progestin receptor gamma-A (paqr5a).